Reading from the N-terminus, the 570-residue chain is Urease subunit alpha 1 (570 aa).

The 440-residue stretch at 131-570 (GGIDTHVHFI…VPMAQRYFLF (440 aa)) folds into the Urease domain. 3 residues coordinate Ni(2+): H136, H138, and K219. The residue at position 219 (K219) is an N6-carboxylysine. H221 is a binding site for substrate. Residues H248 and H274 each coordinate Ni(2+). The active-site Proton donor is H322. A Ni(2+)-binding site is contributed by D362.

This sequence belongs to the metallo-dependent hydrolases superfamily. Urease alpha subunit family. As to quaternary structure, heterotrimer of UreA (gamma), UreB (beta) and UreC (alpha) subunits. Three heterotrimers associate to form the active enzyme. Requires Ni cation as cofactor. Post-translationally, carboxylation allows a single lysine to coordinate two nickel ions.

It is found in the cytoplasm. It catalyses the reaction urea + 2 H2O + H(+) = hydrogencarbonate + 2 NH4(+). It functions in the pathway nitrogen metabolism; urea degradation; CO(2) and NH(3) from urea (urease route): step 1/1. This is Urease subunit alpha 1 from Brucella melitensis biotype 1 (strain ATCC 23456 / CCUG 17765 / NCTC 10094 / 16M).